Reading from the N-terminus, the 338-residue chain is Methionine import ATP-binding protein MetN 1 (338 aa).

In terms of domain architecture, ABC transporter spans 2–241; sequence IELHQVSKSF…AKHATTKRFV (240 aa). ATP is bound at residue 38–45; sequence GYSGAGKS.

Belongs to the ABC transporter superfamily. Methionine importer (TC 3.A.1.24) family. The complex is composed of two ATP-binding proteins (MetN), two transmembrane proteins (MetI) and a solute-binding protein (MetQ).

The protein localises to the cell membrane. The enzyme catalyses L-methionine(out) + ATP + H2O = L-methionine(in) + ADP + phosphate + H(+). It catalyses the reaction D-methionine(out) + ATP + H2O = D-methionine(in) + ADP + phosphate + H(+). Functionally, part of the ABC transporter complex MetNIQ involved in methionine import. Responsible for energy coupling to the transport system. The sequence is that of Methionine import ATP-binding protein MetN 1 from Listeria monocytogenes serovar 1/2a (strain ATCC BAA-679 / EGD-e).